The chain runs to 306 residues: Small ribosomal subunit biogenesis GTPase RsgA (306 aa).

Positions 77–236 (KNELKRPNVA…IVDTPGFSKL (160 aa)) constitute a CP-type G domain. GTP-binding positions include 126-129 (SKID) and 179-187 (GQTGVGKST). 4 residues coordinate Zn(2+): C260, C266, H268, and C274.

The protein belongs to the TRAFAC class YlqF/YawG GTPase family. RsgA subfamily. In terms of assembly, monomer. Associates with 30S ribosomal subunit, binds 16S rRNA. Zn(2+) is required as a cofactor.

Its subcellular location is the cytoplasm. In terms of biological role, one of several proteins that assist in the late maturation steps of the functional core of the 30S ribosomal subunit. Helps release RbfA from mature subunits. May play a role in the assembly of ribosomal proteins into the subunit. Circularly permuted GTPase that catalyzes slow GTP hydrolysis, GTPase activity is stimulated by the 30S ribosomal subunit. This chain is Small ribosomal subunit biogenesis GTPase RsgA, found in Onion yellows phytoplasma (strain OY-M).